The sequence spans 170 residues: UPF0260 protein RPE_1881 (170 aa).

The protein belongs to the UPF0260 family.

In Rhodopseudomonas palustris (strain BisA53), this protein is UPF0260 protein RPE_1881.